A 50-amino-acid polypeptide reads, in one-letter code: uncharacterized protein (50 aa).

This is an uncharacterized protein from Dichelobacter nodosus (Bacteroides nodosus).